The chain runs to 357 residues: Holliday junction branch migration complex subunit RuvB (357 aa).

A compositionally biased stretch (low complexity) spans 1–15 (MAIQSDSLSSLPDSP). Positions 1-30 (MAIQSDSLSSLPDSPRIVAPQPVSPNEESI) are disordered. Positions 13 to 195 (DSPRIVAPQP…FGIVSRLEFY (183 aa)) are large ATPase domain (RuvB-L). ATP-binding positions include Leu-34, Arg-35, Gly-76, Lys-79, Thr-80, Thr-81, 142–144 (EDF), Arg-185, Tyr-195, and Arg-232. Mg(2+) is bound at residue Thr-80. The tract at residues 196 to 266 (NTDELARIVT…AAGRALAMLD (71 aa)) is small ATPAse domain (RuvB-S). Positions 269–357 (PQGLDVMDRK…SGGTGELFSK (89 aa)) are head domain (RuvB-H). DNA is bound by residues Arg-305, Arg-324, and Arg-329.

The protein belongs to the RuvB family. As to quaternary structure, homohexamer. Forms an RuvA(8)-RuvB(12)-Holliday junction (HJ) complex. HJ DNA is sandwiched between 2 RuvA tetramers; dsDNA enters through RuvA and exits via RuvB. An RuvB hexamer assembles on each DNA strand where it exits the tetramer. Each RuvB hexamer is contacted by two RuvA subunits (via domain III) on 2 adjacent RuvB subunits; this complex drives branch migration. In the full resolvosome a probable DNA-RuvA(4)-RuvB(12)-RuvC(2) complex forms which resolves the HJ.

The protein resides in the cytoplasm. It catalyses the reaction ATP + H2O = ADP + phosphate + H(+). Functionally, the RuvA-RuvB-RuvC complex processes Holliday junction (HJ) DNA during genetic recombination and DNA repair, while the RuvA-RuvB complex plays an important role in the rescue of blocked DNA replication forks via replication fork reversal (RFR). RuvA specifically binds to HJ cruciform DNA, conferring on it an open structure. The RuvB hexamer acts as an ATP-dependent pump, pulling dsDNA into and through the RuvAB complex. RuvB forms 2 homohexamers on either side of HJ DNA bound by 1 or 2 RuvA tetramers; 4 subunits per hexamer contact DNA at a time. Coordinated motions by a converter formed by DNA-disengaged RuvB subunits stimulates ATP hydrolysis and nucleotide exchange. Immobilization of the converter enables RuvB to convert the ATP-contained energy into a lever motion, pulling 2 nucleotides of DNA out of the RuvA tetramer per ATP hydrolyzed, thus driving DNA branch migration. The RuvB motors rotate together with the DNA substrate, which together with the progressing nucleotide cycle form the mechanistic basis for DNA recombination by continuous HJ branch migration. Branch migration allows RuvC to scan DNA until it finds its consensus sequence, where it cleaves and resolves cruciform DNA. The protein is Holliday junction branch migration complex subunit RuvB of Bordetella bronchiseptica (strain ATCC BAA-588 / NCTC 13252 / RB50) (Alcaligenes bronchisepticus).